The primary structure comprises 504 residues: D-alanine--D-alanyl carrier protein ligase (504 aa).

152–153 contacts ATP; that stretch reads TS. Aspartate 197 is a D-alanine binding site. 292 to 297 lines the ATP pocket; it reads NTYGPT. Valine 301 contributes to the D-alanine binding site. Residues aspartate 383, 394 to 397, and lysine 492 each bind ATP; that span reads YNGR. A D-alanine-binding site is contributed by lysine 492.

The protein belongs to the ATP-dependent AMP-binding enzyme family. DltA subfamily.

It localises to the cytoplasm. It carries out the reaction holo-[D-alanyl-carrier protein] + D-alanine + ATP = D-alanyl-[D-alanyl-carrier protein] + AMP + diphosphate. It participates in cell wall biogenesis; lipoteichoic acid biosynthesis. Catalyzes the first step in the D-alanylation of lipoteichoic acid (LTA), the activation of D-alanine and its transfer onto the D-alanyl carrier protein (Dcp) DltC. In an ATP-dependent two-step reaction, forms a high energy D-alanyl-AMP intermediate, followed by transfer of the D-alanyl residue as a thiol ester to the phosphopantheinyl prosthetic group of the Dcp. D-alanylation of LTA plays an important role in modulating the properties of the cell wall in Gram-positive bacteria, influencing the net charge of the cell wall. The sequence is that of D-alanine--D-alanyl carrier protein ligase from Bacillus cereus (strain G9842).